The following is a 69-amino-acid chain: Beta-defensin 1 (69 aa).

The signal sequence occupies residues 1–21 (MKTHYFLLVMLFFLFSQMELG). Residues 22-32 (AGILTSLGRRT) constitute a propeptide that is removed on maturation. Disulfide bonds link Cys-37–Cys-66, Cys-44–Cys-59, and Cys-49–Cys-67.

This sequence belongs to the beta-defensin family. In terms of assembly, monomer. Homodimer. Highly expressed in kidney.

It is found in the secreted. The protein resides in the membrane. Its function is as follows. Has bactericidal activity. May act as a ligand for C-C chemokine receptor CCR6. Positively regulates the sperm motility and bactericidal activity in a CCR6-dependent manner. Binds to CCR6 and triggers Ca2+ mobilization in the sperm which is important for its motility. The protein is Beta-defensin 1 (Defb1) of Rattus norvegicus (Rat).